Consider the following 285-residue polypeptide: MFNWVKTAMLMAAITALFIVIGGMIGGSRGMTIALLIALGMNFFSYWFSDKMVLRMYNAQEVDEATAPQFYRMVRELATRANLPMPRVYLIDENQPNAFATGRNPEHAAVAATTGILRVLSEREMRGVMAHELAHVKHRDILISTISATMAGAISALANFAMFFGGRDENGRPANPIAGIAVALLAPIAGALIQMAISRAREFEADRGGAQISGDPQALASALDKIHRYASGIPFQTAEEHPATAQMMIMNPLSGGGLQNLFSTHPATEERIARLMDMARTGRFD.

Transmembrane regions (helical) follow at residues 7–27 (TAMLMAAITALFIVIGGMIGG) and 30–50 (GMTIALLIALGMNFFSYWFSD). H131 contributes to the Zn(2+) binding site. The active site involves E132. A Zn(2+)-binding site is contributed by H135. 2 helical membrane-spanning segments follow: residues 146 to 166 (ISATMAGAISALANFAMFFGG) and 177 to 197 (IAGIAVALLAPIAGALIQMAI). Position 202 (E202) interacts with Zn(2+).

It belongs to the peptidase M48B family. Requires Zn(2+) as cofactor.

The protein resides in the cell inner membrane. This Burkholderia mallei (strain NCTC 10247) protein is Protease HtpX homolog.